Reading from the N-terminus, the 208-residue chain is Protein-L-isoaspartate O-methyltransferase (208 aa).

The active site involves Ser59.

This sequence belongs to the methyltransferase superfamily. L-isoaspartyl/D-aspartyl protein methyltransferase family.

Its subcellular location is the cytoplasm. It catalyses the reaction [protein]-L-isoaspartate + S-adenosyl-L-methionine = [protein]-L-isoaspartate alpha-methyl ester + S-adenosyl-L-homocysteine. Its function is as follows. Catalyzes the methyl esterification of L-isoaspartyl residues in peptides and proteins that result from spontaneous decomposition of normal L-aspartyl and L-asparaginyl residues. It plays a role in the repair and/or degradation of damaged proteins. The sequence is that of Protein-L-isoaspartate O-methyltransferase from Vibrio cholerae serotype O1 (strain ATCC 39541 / Classical Ogawa 395 / O395).